The primary structure comprises 236 residues: 4-aminobenzoate synthase (236 aa).

Glu-87, His-94, Glu-148, His-180, Asp-184, and His-187 together coordinate Fe(2+).

This sequence belongs to the CADD family. Homodimer. Fe(2+) is required as a cofactor. Requires Mn(2+) as cofactor.

Involved in de novo para-aminobenzoate (PABA) biosynthesis. Acts as a self-sacrificing or 'suicide' enzyme that utilizes its own active site tyrosine residue(s) as the substrate for PABA synthesis. The side chain of the tyrosine residue is released from the protein backbone via cleavage of the C(alpha)-C(beta) bond, leaving a glycine in place of the original tyrosine residue. Reaction requires O(2) and a reduced dimetal cofactor. The sequence is that of 4-aminobenzoate synthase from Chlamydia muridarum (strain MoPn / Nigg).